Reading from the N-terminus, the 40-residue chain is Small polypeptide DEVIL 6 (40 aa).

The tract at residues 9–40 (SSSRGLGGVLREQRAKLYIIKRCVVMLLCWQD) is required for DVL/RTFL small polypeptide activity. The helical transmembrane segment at 12-28 (RGLGGVLREQRAKLYII) threads the bilayer.

Belongs to the DVL/RTFL small polypeptides family.

The protein resides in the cell membrane. Functionally, small polypeptide acting as a regulatory molecule which coordinates cellular responses required for differentiation, growth and development, probably by restricting polar cell proliferation in lateral organs and coordinating socket cell recruitment and differentiation at trichome sites. In Arabidopsis thaliana (Mouse-ear cress), this protein is Small polypeptide DEVIL 6.